We begin with the raw amino-acid sequence, 146 residues long: Hemoglobin subunit beta (146 aa).

Val1 is modified (N-acetylvaline). Positions 2–146 (HLTGEEKAAV…VATALAHKYH (145 aa)) constitute a Globin domain. Residue Thr12 is modified to Phosphothreonine. A Phosphoserine modification is found at Ser44. Lys59 carries the post-translational modification N6-acetyllysine. Heme b is bound at residue His63. Lys82 bears the N6-acetyllysine mark. His92 contributes to the heme b binding site. The residue at position 93 (Cys93) is an S-nitrosocysteine. N6-acetyllysine is present on Lys144.

It belongs to the globin family. As to quaternary structure, heterotetramer of two alpha chains and two beta chains. As to expression, red blood cells.

Its function is as follows. Involved in oxygen transport from the lung to the various peripheral tissues. This is Hemoglobin subunit beta (HBB) from Macroderma gigas (Australian ghost bat).